Reading from the N-terminus, the 254-residue chain is Persulfide dioxygenase ETHE1, mitochondrial (254 aa).

A mitochondrion-targeting transit peptide spans 1-7; it reads MAGSVLK. Serine 14 and serine 19 each carry phosphoserine. Lysine 32 is subject to N6-acetyllysine; alternate. Residue lysine 32 is modified to N6-succinyllysine; alternate. The residue at position 66 (lysine 66) is an N6-acetyllysine. Fe cation is bound by residues histidine 79, histidine 135, and aspartate 154.

This sequence belongs to the metallo-beta-lactamase superfamily. Glyoxalase II family. In terms of assembly, homodimer. Monomer. Interacts with TST. May interact with RELA. Fe(2+) is required as a cofactor.

The protein localises to the cytoplasm. The protein resides in the nucleus. Its subcellular location is the mitochondrion matrix. It carries out the reaction S-sulfanylglutathione + O2 + H2O = sulfite + glutathione + 2 H(+). Its activity is regulated as follows. Glutathione increases enzyme activity. Sulfur dioxygenase that plays an essential role in hydrogen sulfide catabolism in the mitochondrial matrix. Hydrogen sulfide (H(2)S) is first oxidized by SQRDL, giving rise to cysteine persulfide residues. ETHE1 consumes molecular oxygen to catalyze the oxidation of the persulfide, once it has been transferred to a thiophilic acceptor, such as glutathione (R-SSH). Plays an important role in metabolic homeostasis in mitochondria by metabolizing hydrogen sulfide and preventing the accumulation of supraphysiological H(2)S levels that have toxic effects, due to the inhibition of cytochrome c oxidase. First described as a protein that can shuttle between the nucleus and the cytoplasm and suppress p53-induced apoptosis by sequestering the transcription factor RELA/NFKB3 in the cytoplasm and preventing its accumulation in the nucleus. The protein is Persulfide dioxygenase ETHE1, mitochondrial (ETHE1) of Bos taurus (Bovine).